We begin with the raw amino-acid sequence, 191 residues long: Adenine phosphoribosyltransferase (191 aa).

Belongs to the purine/pyrimidine phosphoribosyltransferase family. Homodimer.

It localises to the cytoplasm. It carries out the reaction AMP + diphosphate = 5-phospho-alpha-D-ribose 1-diphosphate + adenine. Its pathway is purine metabolism; AMP biosynthesis via salvage pathway; AMP from adenine: step 1/1. Functionally, catalyzes a salvage reaction resulting in the formation of AMP, that is energically less costly than de novo synthesis. The chain is Adenine phosphoribosyltransferase from Bordetella bronchiseptica (strain ATCC BAA-588 / NCTC 13252 / RB50) (Alcaligenes bronchisepticus).